Consider the following 143-residue polypeptide: uncharacterized protein (143 aa).

Residues 1 to 27 (MSDEIARLVADVFELAGLLRRSGEVVA) form the signal peptide.

This is an uncharacterized protein from Mycobacterium tuberculosis (strain CDC 1551 / Oshkosh).